Reading from the N-terminus, the 290-residue chain is GTPase Era (290 aa).

An Era-type G domain is found at 2 to 169 (KSGFVSIIGR…KDKIYANLQE (168 aa)). Positions 10–17 (GRPSTGKS) are G1. 10–17 (GRPSTGKS) contributes to the GTP binding site. The G2 stretch occupies residues 36–40 (QTTRN). Residues 57–60 (DTPG) form a G3 region. GTP is bound by residues 57–61 (DTPGF) and 119–122 (NKID). The G4 stretch occupies residues 119 to 122 (NKID). Positions 148 to 150 (ISA) are G5. Residues 200 to 276 (LKEELPYSLY…DLFLQVKLRK (77 aa)) form the KH type-2 domain.

It belongs to the TRAFAC class TrmE-Era-EngA-EngB-Septin-like GTPase superfamily. Era GTPase family. As to quaternary structure, monomer.

It is found in the cytoplasm. The protein localises to the cell inner membrane. Its function is as follows. An essential GTPase that binds both GDP and GTP, with rapid nucleotide exchange. Plays a role in 16S rRNA processing and 30S ribosomal subunit biogenesis and possibly also in cell cycle regulation and energy metabolism. This is GTPase Era from Borrelia hermsii (strain HS1 / DAH).